The following is a 120-amino-acid chain: Ribonuclease P protein component 2 (120 aa).

Belongs to the eukaryotic/archaeal RNase P protein component 2 family. As to quaternary structure, consists of a catalytic RNA component and at least 4-5 protein subunits.

The protein localises to the cytoplasm. The enzyme catalyses Endonucleolytic cleavage of RNA, removing 5'-extranucleotides from tRNA precursor.. Its function is as follows. Part of ribonuclease P, a protein complex that generates mature tRNA molecules by cleaving their 5'-ends. This Methanobrevibacter smithii (strain ATCC 35061 / DSM 861 / OCM 144 / PS) protein is Ribonuclease P protein component 2.